The primary structure comprises 84 residues: Large ribosomal subunit protein bL27 (84 aa).

Residues Met1–Gly22 are disordered. Over residues Ala7–Gln19 the composition is skewed to polar residues.

This sequence belongs to the bacterial ribosomal protein bL27 family.

The polypeptide is Large ribosomal subunit protein bL27 (Streptomyces coelicolor (strain ATCC BAA-471 / A3(2) / M145)).